A 695-amino-acid polypeptide reads, in one-letter code: UvrABC system protein C (695 aa).

The segment covering 1-10 has biased composition (basic and acidic residues); the sequence is MNQDPAETRD. Residues 1–53 form a disordered region; it reads MNQDPAETRDTAAPPPADTTSPSPVSPELEPRSAPGAQDIDAASASLTVDEDD. The segment covering 18–27 has biased composition (low complexity); it reads DTTSPSPVSP. Residues 88–166 enclose the GIY-YIG domain; it reads TSPGVYRMLN…IKQLRPRFNV (79 aa). Residues 276 to 311 form the UVR domain; the sequence is RAVKQELAVEMEKASNELEFETAALYRDRLAALSAI.

It belongs to the UvrC family. Interacts with UvrB in an incision complex.

Its subcellular location is the cytoplasm. Functionally, the UvrABC repair system catalyzes the recognition and processing of DNA lesions. UvrC both incises the 5' and 3' sides of the lesion. The N-terminal half is responsible for the 3' incision and the C-terminal half is responsible for the 5' incision. This is UvrABC system protein C from Rhodopseudomonas palustris (strain BisB5).